A 315-amino-acid chain; its full sequence is Peroxidase 4 (315 aa).

A signal peptide spans 1 to 19 (MAIFKILVLLLSLCCFSQA). Pyrrolidone carboxylic acid is present on Q20. Disulfide bonds link C30–C110, C63–C68, C116–C311, and C195–C221. The active-site Proton acceptor is the H61. The Ca(2+) site is built by D62, V65, G67, D69, and S71. Residue P158 participates in substrate binding. H188 contacts heme b. T189 lines the Ca(2+) pocket. N-linked (GlcNAc...) asparagine glycosylation occurs at N205. Residues D234, T237, and D242 each coordinate Ca(2+).

It belongs to the peroxidase family. Classical plant (class III) peroxidase subfamily. Heme b serves as cofactor. It depends on Ca(2+) as a cofactor.

Its subcellular location is the secreted. It carries out the reaction 2 a phenolic donor + H2O2 = 2 a phenolic radical donor + 2 H2O. Functionally, removal of H(2)O(2), oxidation of toxic reductants, biosynthesis and degradation of lignin, suberization, auxin catabolism, response to environmental stresses such as wounding, pathogen attack and oxidative stress. These functions might be dependent on each isozyme/isoform in each plant tissue. The protein is Peroxidase 4 (PER4) of Arabidopsis thaliana (Mouse-ear cress).